The primary structure comprises 266 residues: UPF0294 protein YafD (266 aa).

The protein belongs to the UPF0294 family.

The protein localises to the cytoplasm. The protein is UPF0294 protein YafD of Salmonella paratyphi C (strain RKS4594).